We begin with the raw amino-acid sequence, 349 residues long: MKLQILLLALVLIAVEANAVKQGINATIPALIVFGDSIMDTGNNNNLPTLLKCNFPPYGKDYPGGDATGRFSDGRVPSDLIAEKLGLAKTLPAYMNSYLKPEDLLKGVTFASRGTGYDPLTAKIMSVISVWDQLIYFKEYISKIKRHFGEEKAKDILEHSFFLVVSSSNDLAHTYLAQAHRYDRTSYANFLADSAVHFVRELHKLGARKIGVFSAVPVGCVPLQRTVFGGFFTRGCNEPLNNMAKQFNARLSPALDSLDKELDGVILYINVYDTLFDMIQHPKKYGFDVADKGCCGKGLLTISYLCNSLNPFTCSNSSSYIFWDSYHPSERAYQVIVDNLLDKYLSKVY.

An N-terminal signal peptide occupies residues 1–19; that stretch reads MKLQILLLALVLIAVEANA. Asn25 carries an N-linked (GlcNAc...) asparagine glycan. Ser37 serves as the catalytic Nucleophile. Residue Asn316 is glycosylated (N-linked (GlcNAc...) asparagine). Active-site residues include Asp324 and His327.

This sequence belongs to the 'GDSL' lipolytic enzyme family.

The protein resides in the secreted. This Arabidopsis thaliana (Mouse-ear cress) protein is GDSL esterase/lipase At1g58525.